Consider the following 264-residue polypeptide: Teichoic acids export ATP-binding protein TagH (264 aa).

One can recognise an ABC transporter domain in the interval 24-243; the sequence is IKDALIPKNK…YEAFLKTFKK (220 aa). Position 57 to 64 (57 to 64) interacts with ATP; sequence GINGSGKS.

The protein belongs to the ABC transporter superfamily. Teichoic acids exporter (TC 3.A.1.104.1) family. The complex is composed of two ATP-binding proteins (TagH) and two transmembrane proteins (TagG).

It localises to the cell membrane. The catalysed reaction is ATP + H2O + teichoic acidSide 1 = ADP + phosphate + teichoic acidSide 2.. Part of the ABC transporter complex TagGH involved in teichoic acids export. Responsible for energy coupling to the transport system. This chain is Teichoic acids export ATP-binding protein TagH, found in Staphylococcus epidermidis (strain ATCC 35984 / DSM 28319 / BCRC 17069 / CCUG 31568 / BM 3577 / RP62A).